The sequence spans 349 residues: GDSL esterase/lipase At2g19060 (349 aa).

The signal sequence occupies residues M1–G25. Catalysis depends on S37, which acts as the Nucleophile. N-linked (GlcNAc...) asparagine glycosylation occurs at N178. Active-site residues include D317 and H320.

The protein belongs to the 'GDSL' lipolytic enzyme family.

The protein resides in the secreted. This chain is GDSL esterase/lipase At2g19060, found in Arabidopsis thaliana (Mouse-ear cress).